The sequence spans 422 residues: Chorismate synthase (422 aa).

Residues arginine 43 and arginine 49 each coordinate NADP(+). FMN is bound by residues 143-145 (RSS), 264-265 (QA), glycine 309, 324-328 (KPIST), and arginine 350.

The protein belongs to the chorismate synthase family. As to quaternary structure, homotetramer. Requires FMNH2 as cofactor.

The catalysed reaction is 5-O-(1-carboxyvinyl)-3-phosphoshikimate = chorismate + phosphate. Its pathway is metabolic intermediate biosynthesis; chorismate biosynthesis; chorismate from D-erythrose 4-phosphate and phosphoenolpyruvate: step 7/7. Functionally, catalyzes the anti-1,4-elimination of the C-3 phosphate and the C-6 proR hydrogen from 5-enolpyruvylshikimate-3-phosphate (EPSP) to yield chorismate, which is the branch point compound that serves as the starting substrate for the three terminal pathways of aromatic amino acid biosynthesis. This reaction introduces a second double bond into the aromatic ring system. The sequence is that of Chorismate synthase from Corynebacterium jeikeium (strain K411).